The sequence spans 573 residues: Chaperone Ric-8 (573 aa).

Basic and acidic residues predominate over residues 308 to 324 (ESHKEREQDNEKEKDTE). Disordered stretches follow at residues 308-329 (ESHK…GAGA) and 473-493 (GTDY…QQQQ). Phosphoserine occurs at positions 477, 478, 480, and 483.

Belongs to the synembryn family. In terms of assembly, interacts with GDP-bound G(i)-alpha protein G-i-alpha-65A. Does not interact with G-alpha proteins when they are in complex with subunits beta and gamma. Interacts with Frq2 in a Ca(2+)-independent manner but does not interact with Frq1. Expression in the embryo is primarily neural.

The protein resides in the cytoplasm. It localises to the cell cortex. The protein localises to the presynapse. Functionally, chaperone that specifically binds and folds some, but not all, nascent G alpha proteins prior to G protein heterotrimer formation, promoting their stability and activity. Also acts as a guanine nucleotide exchange factor (GEF) for G alpha proteins by stimulating exchange of bound GDP for free GTP. Plays a key role in asymmetric spindle positioning, a step for asymmetric cell division that generates cell diversity during development by activating G(i) alpha protein independently of G-protein coupled receptors. Required during gastrulation and sensory organ precursor (SOP) formation. Plays a role in positively regulating synapse number and neurotransmitter release. The sequence is that of Chaperone Ric-8 (ric8a) from Drosophila melanogaster (Fruit fly).